A 391-amino-acid polypeptide reads, in one-letter code: Erythronate-4-phosphate dehydrogenase (391 aa).

Substrate-binding residues include Ser45 and Thr67. NAD(+)-binding residues include Asp147 and Thr176. Arg209 is an active-site residue. Asp238 lines the NAD(+) pocket. Residue Glu243 is part of the active site. Catalysis depends on His260, which acts as the Proton donor. Position 263 (Gly263) interacts with NAD(+). Tyr264 contributes to the substrate binding site.

It belongs to the D-isomer specific 2-hydroxyacid dehydrogenase family. PdxB subfamily. In terms of assembly, homodimer.

It localises to the cytoplasm. The enzyme catalyses 4-phospho-D-erythronate + NAD(+) = (R)-3-hydroxy-2-oxo-4-phosphooxybutanoate + NADH + H(+). It participates in cofactor biosynthesis; pyridoxine 5'-phosphate biosynthesis; pyridoxine 5'-phosphate from D-erythrose 4-phosphate: step 2/5. Catalyzes the oxidation of erythronate-4-phosphate to 3-hydroxy-2-oxo-4-phosphonooxybutanoate. This Photobacterium profundum (strain SS9) protein is Erythronate-4-phosphate dehydrogenase.